Reading from the N-terminus, the 129-residue chain is Protein Wnt-6 (129 aa).

Cystine bridges form between Cys3-Cys17, Cys5-Cys12, Cys75-Cys106, Cys91-Cys101, and Cys128-Cys129. The O-palmitoleoyl serine; by PORCN moiety is linked to residue Ser9. Residue Asn92 is glycosylated (N-linked (GlcNAc...) asparagine).

It belongs to the Wnt family. Palmitoleoylation is required for efficient binding to frizzled receptors. Depalmitoleoylation leads to Wnt signaling pathway inhibition. At tailbud: dorsal, punctate; in adult: brain and heart.

Its subcellular location is the secreted. It localises to the extracellular space. The protein resides in the extracellular matrix. In terms of biological role, ligand for members of the frizzled family of seven transmembrane receptors. Probable developmental protein. May be a signaling molecule which affects the development of discrete regions of tissues. Is likely to signal over only few cell diameters. This Xenopus laevis (African clawed frog) protein is Protein Wnt-6 (wnt6).